The following is a 599-amino-acid chain: Elongation factor 4 (599 aa).

A tr-type G domain is found at 5–187 (SHIRNFSIIA…ALVNGIPAPV (183 aa)). Residues 17–22 (DHGKST) and 134–137 (NKMD) contribute to the GTP site.

This sequence belongs to the TRAFAC class translation factor GTPase superfamily. Classic translation factor GTPase family. LepA subfamily.

The protein resides in the cell inner membrane. The enzyme catalyses GTP + H2O = GDP + phosphate + H(+). In terms of biological role, required for accurate and efficient protein synthesis under certain stress conditions. May act as a fidelity factor of the translation reaction, by catalyzing a one-codon backward translocation of tRNAs on improperly translocated ribosomes. Back-translocation proceeds from a post-translocation (POST) complex to a pre-translocation (PRE) complex, thus giving elongation factor G a second chance to translocate the tRNAs correctly. Binds to ribosomes in a GTP-dependent manner. The sequence is that of Elongation factor 4 from Teredinibacter turnerae (strain ATCC 39867 / T7901).